A 102-amino-acid chain; its full sequence is MFAIIETGGKQYKVKEHDIIRIEKLNASVGEEVTLSKVIALTGVNNEVIFTQNASVTASVLEQCRNDKVIIFKKKRRKNYRRKNGHRQYMTVLRITKINNME.

The protein belongs to the bacterial ribosomal protein bL21 family. In terms of assembly, part of the 50S ribosomal subunit. Contacts protein L20.

This protein binds to 23S rRNA in the presence of protein L20. The polypeptide is Large ribosomal subunit protein bL21 (Ehrlichia ruminantium (strain Welgevonden)).